The chain runs to 299 residues: tRNA pseudouridine synthase B (299 aa).

Asp-39 (nucleophile) is an active-site residue.

This sequence belongs to the pseudouridine synthase TruB family. Type 1 subfamily.

The enzyme catalyses uridine(55) in tRNA = pseudouridine(55) in tRNA. Functionally, responsible for synthesis of pseudouridine from uracil-55 in the psi GC loop of transfer RNAs. The polypeptide is tRNA pseudouridine synthase B (Syntrophomonas wolfei subsp. wolfei (strain DSM 2245B / Goettingen)).